The sequence spans 167 residues: Large ribosomal subunit protein uL10 (167 aa).

It belongs to the universal ribosomal protein uL10 family. Part of the ribosomal stalk of the 50S ribosomal subunit. The N-terminus interacts with L11 and the large rRNA to form the base of the stalk. The C-terminus forms an elongated spine to which L12 dimers bind in a sequential fashion forming a multimeric L10(L12)X complex.

Its function is as follows. Forms part of the ribosomal stalk, playing a central role in the interaction of the ribosome with GTP-bound translation factors. This Yersinia enterocolitica serotype O:8 / biotype 1B (strain NCTC 13174 / 8081) protein is Large ribosomal subunit protein uL10.